The primary structure comprises 358 residues: DNA integrity scanning protein DisA (358 aa).

Residues R6–S144 enclose the DAC domain. ATP-binding positions include G73, L91, and T104 to S108.

Belongs to the DisA family. Homooctamer. Requires Mg(2+) as cofactor.

It carries out the reaction 2 ATP = 3',3'-c-di-AMP + 2 diphosphate. Participates in a DNA-damage check-point. DisA forms globular foci that rapidly scan along the chromosomes searching for lesions. In terms of biological role, also has diadenylate cyclase activity, catalyzing the condensation of 2 ATP molecules into cyclic di-AMP (c-di-AMP). c-di-AMP likely acts as a signaling molecule that may couple DNA integrity with a cellular process. The protein is DNA integrity scanning protein DisA of Mycobacterium tuberculosis (strain ATCC 25177 / H37Ra).